Consider the following 264-residue polypeptide: 3-methyl-2-oxobutanoate hydroxymethyltransferase (264 aa).

Mg(2+) is bound by residues D45 and D84. Residues 45–46, D84, and K112 contribute to the 3-methyl-2-oxobutanoate site; that span reads DS. E114 provides a ligand contact to Mg(2+). Residue E181 is the Proton acceptor of the active site.

The protein belongs to the PanB family. As to quaternary structure, homodecamer; pentamer of dimers. Mg(2+) is required as a cofactor.

Its subcellular location is the cytoplasm. It carries out the reaction 3-methyl-2-oxobutanoate + (6R)-5,10-methylene-5,6,7,8-tetrahydrofolate + H2O = 2-dehydropantoate + (6S)-5,6,7,8-tetrahydrofolate. Its pathway is cofactor biosynthesis; (R)-pantothenate biosynthesis; (R)-pantoate from 3-methyl-2-oxobutanoate: step 1/2. Functionally, catalyzes the reversible reaction in which hydroxymethyl group from 5,10-methylenetetrahydrofolate is transferred onto alpha-ketoisovalerate to form ketopantoate. This chain is 3-methyl-2-oxobutanoate hydroxymethyltransferase, found in Shewanella sediminis (strain HAW-EB3).